A 604-amino-acid chain; its full sequence is uncharacterized protein (604 aa).

Positions 49-332 (LILVMLMVVI…LANQFNTMLS (284 aa)) constitute an ABC transmembrane type-1 domain. The next 4 helical transmembrane spans lie at 50-70 (ILVMLMVVISAIFGLLGPFVI), 86-106 (LIPVLLLLLAIYIIQSLSLWF), 172-192 (VITFVGTIAVMLYMSPLLTLI), and 288-308 (IAAIGGLFALKGWISIGSIVV). In terms of domain architecture, ABC transporter spans 366–600 (IEFRDVSFGY…KGFYSDLYES (235 aa)). Residue 399–406 (GPTGAGKT) coordinates ATP. The helical transmembrane segment at 510–530 (LISIARAVLADPVLLILDEAT) threads the bilayer.

The protein belongs to the ABC transporter superfamily.

It localises to the cell membrane. This is an uncharacterized protein from Bacillus subtilis (strain 168).